Consider the following 455-residue polypeptide: Major facilitator superfamily domain-containing protein 10 (455 aa).

The next 11 helical transmembrane spans lie at V27–P47, V86–L106, C113–A135, L148–G168, G176–A196, M202–L222, L275–F295, K310–A327, V336–G356, L359–C379, and L421–L441.

It belongs to the major facilitator superfamily. Expressed in luminal membrane of renal tubules (at protein level). Detected in all tissues tested with higher expression in heart, splee, kidney, leukocytes and prostate.

The protein localises to the nucleus inner membrane. Its subcellular location is the cell membrane. Its function is as follows. Probable organic anion transporter which may serve as a transporter for some non-steroidal anti-inflammatory drugs (NSAIDs) as well as other organic anions across the luminal membranes of renal proximal tubules at the final excretion step into the urine. This Homo sapiens (Human) protein is Major facilitator superfamily domain-containing protein 10 (MFSD10).